A 309-amino-acid chain; its full sequence is Dihydroorotate dehydrogenase B (NAD(+)), catalytic subunit (309 aa).

Residues serine 21 and 45-46 (KA) each bind FMN. Substrate contacts are provided by residues lysine 45 and 69-73 (NAIGL). FMN contacts are provided by asparagine 99 and asparagine 127. A substrate-binding site is contributed by asparagine 127. The Nucleophile role is filled by cysteine 130. Residues lysine 165 and isoleucine 191 each contribute to the FMN site. Residue 192–193 (NT) participates in substrate binding. FMN-binding positions include glycine 217, 243–244 (GG), and 265–266 (GT).

This sequence belongs to the dihydroorotate dehydrogenase family. Type 1 subfamily. In terms of assembly, heterotetramer of 2 PyrK and 2 PyrD type B subunits. It depends on FMN as a cofactor.

It localises to the cytoplasm. The catalysed reaction is (S)-dihydroorotate + NAD(+) = orotate + NADH + H(+). Its pathway is pyrimidine metabolism; UMP biosynthesis via de novo pathway; orotate from (S)-dihydroorotate (NAD(+) route): step 1/1. Catalyzes the conversion of dihydroorotate to orotate with NAD(+) as electron acceptor. The polypeptide is Dihydroorotate dehydrogenase B (NAD(+)), catalytic subunit (pyrD) (Bacillus thuringiensis (strain Al Hakam)).